We begin with the raw amino-acid sequence, 381 residues long: Creatine kinase M-type (381 aa).

The Phosphagen kinase N-terminal domain occupies 11–98; the sequence is KLNYSAAEEF…FDPVIEDRHG (88 aa). One can recognise a Phosphagen kinase C-terminal domain in the interval 125 to 367; it reads YVLSSRVRTG…KLMVEMEKRL (243 aa). ATP contacts are provided by residues 128-132, His191, Arg236, Arg292, 320-325, and Asp335; these read SSRVR and RGTGGV.

It belongs to the ATP:guanido phosphotransferase family. In terms of assembly, dimer of identical or non-identical chains. With MM being the major form in skeletal muscle and myocardium, MB existing in myocardium, and BB existing in many tissues, especially brain.

It is found in the cytoplasm. It catalyses the reaction creatine + ATP = N-phosphocreatine + ADP + H(+). Reversibly catalyzes the transfer of phosphate between ATP and various phosphogens (e.g. creatine phosphate). Creatine kinase isoenzymes play a central role in energy transduction in tissues with large, fluctuating energy demands, such as skeletal muscle, heart, brain and spermatozoa. The protein is Creatine kinase M-type of Tetronarce californica (Pacific electric ray).